Consider the following 36-residue polypeptide: Photosystem I reaction center subunit VIII (36 aa).

The helical transmembrane segment at 10–29 (FVPLVGLVFPAIAMASLFLY) threads the bilayer.

The protein belongs to the PsaI family.

It is found in the plastid. Its subcellular location is the chloroplast thylakoid membrane. May help in the organization of the PsaL subunit. This is Photosystem I reaction center subunit VIII from Oryza nivara (Indian wild rice).